The chain runs to 231 residues: NADH-ubiquinone oxidoreductase chain 4 (231 aa).

The next 6 helical transmembrane spans lie at 1–21 (PIAG…YGII), 34–54 (LFLP…LTCL), 63–85 (IAYS…TPWG), 89–111 (AMAL…NTTY), 118–138 (ILIL…WWLL), and 156–176 (LLIM…LGLS).

Belongs to the complex I subunit 4 family.

The protein localises to the mitochondrion membrane. The catalysed reaction is a ubiquinone + NADH + 5 H(+)(in) = a ubiquinol + NAD(+) + 4 H(+)(out). In terms of biological role, core subunit of the mitochondrial membrane respiratory chain NADH dehydrogenase (Complex I) that is believed to belong to the minimal assembly required for catalysis. Complex I functions in the transfer of electrons from NADH to the respiratory chain. The immediate electron acceptor for the enzyme is believed to be ubiquinone. This is NADH-ubiquinone oxidoreductase chain 4 (MT-ND4) from Ovophis okinavensis (Ryukyu Island pit viper).